The primary structure comprises 950 residues: Valine--tRNA ligase (950 aa).

A 'HIGH' region motif is present at residues 40–50 (PNVTGSLHMGH). The 'KMSKS' region signature appears at 551–555 (KMSKS). Lys554 contributes to the ATP binding site. A coiled-coil region spans residues 881 to 950 (LIDKSAELGR…AEQRQKIAAL (70 aa)).

The protein belongs to the class-I aminoacyl-tRNA synthetase family. ValS type 1 subfamily. In terms of assembly, monomer.

The protein localises to the cytoplasm. It carries out the reaction tRNA(Val) + L-valine + ATP = L-valyl-tRNA(Val) + AMP + diphosphate. Catalyzes the attachment of valine to tRNA(Val). As ValRS can inadvertently accommodate and process structurally similar amino acids such as threonine, to avoid such errors, it has a 'posttransfer' editing activity that hydrolyzes mischarged Thr-tRNA(Val) in a tRNA-dependent manner. This Pseudomonas aeruginosa (strain ATCC 15692 / DSM 22644 / CIP 104116 / JCM 14847 / LMG 12228 / 1C / PRS 101 / PAO1) protein is Valine--tRNA ligase.